We begin with the raw amino-acid sequence, 295 residues long: Nucleotide-binding protein YvcJ (295 aa).

16–23 (GMSGAGKT) is a binding site for ATP. 67–70 (DLRG) contributes to the GTP binding site.

This sequence belongs to the RapZ-like family.

Displays ATPase and GTPase activities. Can also hydrolyze pNPP. May affect the expression of competence via the phosphorylation of a cellular component. The chain is Nucleotide-binding protein YvcJ (yvcJ) from Bacillus subtilis (strain 168).